Reading from the N-terminus, the 523-residue chain is Heparanase (523 aa).

A signal peptide spans 1–18; sequence MLVLLLLVLLLAVPPRRT. Residues 42–44, T77, and 137–141 contribute to the heparan sulfate group site; these read DAS and KKHKN. N-linked (GlcNAc...) asparagine glycans are attached at residues N141 and N196. E204 serves as the catalytic Proton donor. Heparan sulfate group-binding positions include 250–260, H276, and R283; that span reads QPRKHTQHLLR. Positions 268-397 are required for heterodimerization with the heparanase 8 kDa subunit; that stretch reads KAIDSVTWHH…LLYKRLVGTR (130 aa). Catalysis depends on E323, which acts as the Nucleophile. Heparan sulfate group contacts are provided by residues 328-330 and 369-371; these read YGG and GSY. A disulfide bridge links C417 with C522. N-linked (GlcNAc...) asparagine glycosylation is found at N436 and N439. The interval 507–523 is required for transferring proheparanase to the Golgi apparatus, secretion and subsequent enzyme activity and for enhancement of PKB/AKT1 phosphorylation; the sequence is FSYGFYVIRNAKAIACI.

It belongs to the glycosyl hydrolase 79 family. Heterodimer; the active enzyme is a heterodimer of the 60 kDa and 45 kDa proteolytic products. In terms of processing, N-glycosylated. Post-translationally, proteolytically cleaved to produce a 60 kDa and a 45 kDa product.

Its subcellular location is the secreted. The enzyme catalyses endohydrolysis of (1-&gt;4)-beta-D-glycosidic bonds of heparan sulfate chains in heparan sulfate proteoglycan.. Functionally, endoglycosidase that cleaves heparan sulfate proteoglycans (HSPGs) into heparan sulfate side chains and core proteoglycans. Participates in extracellular matrix (ECM) degradation and remodeling. Selectively cleaves the linkage between a glucuronic acid unit and an N-sulfo glucosamine unit carrying either a 3-O-sulfo or a 6-O-sulfo group. Can also cleave the linkage between a glucuronic acid unit and an N-sulfo glucosamine unit carrying a 2-O-sulfo group, but not linkages between a glucuronic acid unit and a 2-O-sulfated iduronic acid moiety. Increases cell adhesion to the extracellular matrix (ECM), independent of its enzymatic activity. The protein is Heparanase (HPSE) of Gallus gallus (Chicken).